We begin with the raw amino-acid sequence, 1136 residues long: Myosin-binding protein C, fast-type (1136 aa).

2 disordered regions span residues methionine 1–aspartate 55 and alanine 151–glutamate 177. The span at lysine 13–proline 35 shows a compositional bias: basic and acidic residues. In terms of domain architecture, Ig-like C2-type 1 spans proline 46–valine 149. Basic and acidic residues predominate over residues serine 163–aspartate 174. 4 Ig-like C2-type domains span residues serine 250–proline 339, proline 340–lysine 432, glutamine 433–proline 533, and proline 534–valine 633. Fibronectin type-III domains follow at residues proline 636–threonine 732 and alanine 734–isoleucine 829. The Ig-like C2-type 6 domain occupies proline 833 to lysine 927. Residues proline 930–threonine 1025 form the Fibronectin type-III 3 domain. The Ig-like C2-type 7 domain maps to proline 1043 to glutamine 1136.

The protein belongs to the immunoglobulin superfamily. MyBP family.

Thick filament-associated protein located in the crossbridge region of vertebrate striated muscle a bands. In vitro it binds MHC, F-actin and native thin filaments, and modifies the activity of actin-activated myosin ATPase. It may modulate muscle contraction or may play a more structural role. This chain is Myosin-binding protein C, fast-type (Mybpc2), found in Mus musculus (Mouse).